We begin with the raw amino-acid sequence, 43 residues long: Potassium channel toxin gamma-KTx 3.3 (43 aa).

Cystine bridges form between Cys5–Cys23, Cys11–Cys34, Cys20–Cys39, and Cys24–Cys41.

Belongs to the ergtoxin family. Gamma-KTx 3 subfamily. Expressed by the venom gland.

The protein localises to the secreted. In terms of biological role, blocks Kv11/ERG potassium channels. The chain is Potassium channel toxin gamma-KTx 3.3 from Centruroides sculpturatus (Arizona bark scorpion).